Reading from the N-terminus, the 312-residue chain is Tumor necrosis factor receptor type 1-associated DEATH domain protein (312 aa).

Positions 147–163 match the Nuclear export signal motif; sequence LRDEELTELENALRNLT. The tract at residues 166 to 200 is disordered; it reads SAGGQGSDVQGTPAPLQSLAPSPPEEKPPPPQPGQ. A Death domain is found at 215–305; sequence NLQDQQKFAR…SLAEDLLGLA (91 aa). The interaction with KRT14 and KRT18 stretch occupies residues 222–289; that stretch reads FARSVGLKWR…ATLQRLVEAL (68 aa). The short motif at 231 to 244 is the Nuclear localization signal element; sequence RKVGRSLQRSCRAL.

As to quaternary structure, stimulation of TNF-alpha receptor TNFRSF1A leads to the formation of two distinct signaling complexes. Plasma membrane-bound complex I is composed of TNFRSF1A, TRADD, RIPK1, TRAF2 and BIRC2/c-IAP1 or BIRC3 which interacts with CHUCK/IKK-alpha, IKBKB/IKK-beta and IKBKG/IKK-gamma promoting cell survival. Subsequently, TRADD, RIPK1 and TRAF2 dissociate from TNFRSF1A and form cytoplasmic complex II with FADD and caspase CASP8 promoting cell apoptosis. Within complex I, interacts with TNFRSF1A/TNFR1, TRAF2 and kinase RIPK1. Within complex I, interacts with TRPC4AP; the interaction promotes NF-kappa B activation. UXT1 associates with complex I; the interaction prevents the formation of complex II. Within complex I Interacts with scaffold protein DAB2IP. Interacts with autophagy receptor SQSTM1. Interacts with E3 ligase TRIP12. Interacts with kinase HIPK2. Interacts with keratin KRT14. Interacts with keratin KRT18. Interacts with keratins KRT16 and KRT17. Interacts with FADD. Interacts with TOMM70. Interacts with TMC8; the interaction impairs the formation of complex I and facilites complex II formation.

Its subcellular location is the nucleus. The protein resides in the cytoplasm. It is found in the cytoskeleton. In terms of biological role, adapter molecule for TNFRSF1A/TNFR1 that specifically associates with the cytoplasmic domain of activated TNFRSF1A/TNFR1 mediating its interaction with FADD. Overexpression of TRADD leads to two major TNF-induced responses, apoptosis and activation of NF-kappa-B. The nuclear form acts as a tumor suppressor by preventing ubiquitination and degradation of isoform p19ARF/ARF of CDKN2A by TRIP12: acts by interacting with TRIP12, leading to disrupt interaction between TRIP12 and isoform p19ARF/ARF of CDKN2A. This Bos taurus (Bovine) protein is Tumor necrosis factor receptor type 1-associated DEATH domain protein.